A 160-amino-acid polypeptide reads, in one-letter code: Phosphopantetheine adenylyltransferase (160 aa).

Residue Ser-9 participates in substrate binding. Residues 9-10 and His-17 each bind ATP; that span reads SF. Residues Lys-41, Leu-73, and Lys-87 each coordinate substrate. Residues 88–90, Glu-98, and 123–129 contribute to the ATP site; these read GLR and YSYLSSS.

This sequence belongs to the bacterial CoaD family. Homohexamer. Requires Mg(2+) as cofactor.

The protein resides in the cytoplasm. It catalyses the reaction (R)-4'-phosphopantetheine + ATP + H(+) = 3'-dephospho-CoA + diphosphate. It participates in cofactor biosynthesis; coenzyme A biosynthesis; CoA from (R)-pantothenate: step 4/5. Functionally, reversibly transfers an adenylyl group from ATP to 4'-phosphopantetheine, yielding dephospho-CoA (dPCoA) and pyrophosphate. In Clostridium tetani (strain Massachusetts / E88), this protein is Phosphopantetheine adenylyltransferase.